We begin with the raw amino-acid sequence, 103 residues long: Pyrimidine/purine nucleoside phosphorylase (103 aa).

This sequence belongs to the nucleoside phosphorylase PpnP family.

It carries out the reaction a purine D-ribonucleoside + phosphate = a purine nucleobase + alpha-D-ribose 1-phosphate. The catalysed reaction is adenosine + phosphate = alpha-D-ribose 1-phosphate + adenine. It catalyses the reaction cytidine + phosphate = cytosine + alpha-D-ribose 1-phosphate. The enzyme catalyses guanosine + phosphate = alpha-D-ribose 1-phosphate + guanine. It carries out the reaction inosine + phosphate = alpha-D-ribose 1-phosphate + hypoxanthine. The catalysed reaction is thymidine + phosphate = 2-deoxy-alpha-D-ribose 1-phosphate + thymine. It catalyses the reaction uridine + phosphate = alpha-D-ribose 1-phosphate + uracil. The enzyme catalyses xanthosine + phosphate = alpha-D-ribose 1-phosphate + xanthine. In terms of biological role, catalyzes the phosphorolysis of diverse nucleosides, yielding D-ribose 1-phosphate and the respective free bases. Can use uridine, adenosine, guanosine, cytidine, thymidine, inosine and xanthosine as substrates. Also catalyzes the reverse reactions. The chain is Pyrimidine/purine nucleoside phosphorylase from Shewanella denitrificans (strain OS217 / ATCC BAA-1090 / DSM 15013).